We begin with the raw amino-acid sequence, 353 residues long: Protein MGF 360-11L (353 aa).

The ANK repeat unit spans residues 59 to 88 (ELNTVLMKAAKENNHDLIRLFVEWGADINY).

This sequence belongs to the asfivirus MGF 360 family. As to quaternary structure, interacts with host TBK1 ad IRF7.

In terms of biological role, plays a role in virus cell tropism, and may be required for efficient virus replication in macrophages. In addition, inhibits the phosphorylation of host TBK1 and IRF7 and thereby negatively regulates the host cGAS signaling pathway and antagonizes IFN-mediated antiviral activity. In African swine fever virus (isolate Pig/Kenya/KEN-50/1950) (ASFV), this protein is Protein MGF 360-11L.